The following is a 21-amino-acid chain: GIFGKILGAGKKVLCGLSGLC.

Residues C15 and C21 are joined by a disulfide bond.

As to expression, expressed by the skin glands.

The protein resides in the secreted. In terms of biological role, has antibacterial activity against E.coli ATCC 25992 (MIC=16 uM), E.coli CIB 84492 (MIC=16 uM), S.aureus ATCC 25923 (MIC=16 uM) and S.aureus CIB 85462 (MIC=8 uM). Has antifungal activity against C.albicans (MIC=63 uM). Has hemolytic activity against rabbit erythrocytes. The chain is Nigrocin-2JDa from Odorrana jingdongensis (Jingdong frog).